A 622-amino-acid polypeptide reads, in one-letter code: Basic helix-loop-helix ARNT-like protein 2 (622 aa).

Over residues 1–10 the composition is skewed to low complexity; that stretch reads MAEAGVGSAE. Disordered stretches follow at residues 1–29 and 41–86; these read MAEA…DGNS and PITK…EDEE. The segment covering 45–54 has biased composition (polar residues); sequence PATTSFNNSV. Residues 67 to 76 are compositionally biased toward acidic residues; that stretch reads DNQDTVEVDG. Over residues 77 to 86 the composition is skewed to basic and acidic residues; that stretch reads DPQKRNEDEE. In terms of domain architecture, bHLH spans 92-145; the sequence is DFREAHSQTEKRRRDKMNNLIEELSAMIPQCNPMARKLDKLTVLRMAVQHLKSL. PAS domains are found at residues 163–235 and 342–412; these read KDDE…DVSP and VPQK…LQNK. One can recognise a PAC domain in the interval 417–460; that stretch reads TNSYKFRAKDGSFITLKSQWFSFMNPWTKELEYIVSNNTVVLGH.

Component of the circadian core oscillator, which includes the CRY proteins, CLOCK, or NPAS2, BMAL1 or BMAL2, CSNK1D and/or CSNK1E, TIMELESS and the PER proteins. Interacts directly with CLOCK to form the BMAL2-CLOCK transactivator. Can form heterodimers or homodimers which interact directly with CLOCK to form the transcription activator. Expressed in the pineal gland.

It is found in the nucleus. In terms of biological role, transcriptional activator which forms a core component of the circadian clock. The circadian clock, an internal time-keeping system, regulates various physiological processes through the generation of approximately 24 hour circadian rhythms in gene expression, which are translated into rhythms in metabolism and behavior. It is derived from the Latin roots 'circa' (about) and 'diem' (day) and acts as an important regulator of a wide array of physiological functions including metabolism, sleep, body temperature, blood pressure, endocrine, immune, cardiovascular, and renal function. Consists of two major components: the central clock, residing in the suprachiasmatic nucleus (SCN) of the brain, and the peripheral clocks that are present in nearly every tissue and organ system. Both the central and peripheral clocks can be reset by environmental cues, also known as Zeitgebers (German for 'timegivers'). The predominant Zeitgeber for the central clock is light, which is sensed by retina and signals directly to the SCN. The central clock entrains the peripheral clocks through neuronal and hormonal signals, body temperature and feeding-related cues, aligning all clocks with the external light/dark cycle. Circadian rhythms allow an organism to achieve temporal homeostasis with its environment at the molecular level by regulating gene expression to create a peak of protein expression once every 24 hours to control when a particular physiological process is most active with respect to the solar day. Transcription and translation of core clock components (CLOCK, NPAS2, BMAL1, BMAL2, PER1, PER2, PER3, CRY1 and CRY2) plays a critical role in rhythm generation, whereas delays imposed by post-translational modifications (PTMs) are important for determining the period (tau) of the rhythms (tau refers to the period of a rhythm and is the length, in time, of one complete cycle). A diurnal rhythm is synchronized with the day/night cycle, while the ultradian and infradian rhythms have a period shorter and longer than 24 hours, respectively. Disruptions in the circadian rhythms contribute to the pathology of cardiovascular diseases, cancer, metabolic syndromes and aging. A transcription/translation feedback loop (TTFL) forms the core of the molecular circadian clock mechanism. Transcription factors, CLOCK or NPAS2 and BMAL1 or BMAL2, form the positive limb of the feedback loop, act in the form of a heterodimer and activate the transcription of core clock genes and clock-controlled genes (involved in key metabolic processes), harboring E-box elements (5'-CACGTG-3') within their promoters. The core clock genes: PER1/2/3 and CRY1/2 which are transcriptional repressors form the negative limb of the feedback loop and interact with the CLOCK|NPAS2-BMAL1|BMAL2 heterodimer inhibiting its activity and thereby negatively regulating their own expression. This heterodimer also activates nuclear receptors NR1D1/2 and RORA/B/G, which form a second feedback loop and which activate and repress BMAL1 transcription, respectively. The preferred binding motif for the CLOCK-BMAL1 heterodimer is 5'-CACGTGA-3', which contains a flanking adenine nucleotide at the 3-prime end of the canonical 6-nucleotide E-box sequence. CLOCK specifically binds to the half-site 5'-CAC-3', while BMAL1 binds to the half-site 5'-GTGA-3'. The polypeptide is Basic helix-loop-helix ARNT-like protein 2 (BMAL2) (Gallus gallus (Chicken)).